A 228-amino-acid chain; its full sequence is Large ribosomal subunit protein uL3 (228 aa).

It belongs to the universal ribosomal protein uL3 family. In terms of assembly, part of the 50S ribosomal subunit. Forms a cluster with proteins L14 and L19.

Functionally, one of the primary rRNA binding proteins, it binds directly near the 3'-end of the 23S rRNA, where it nucleates assembly of the 50S subunit. This is Large ribosomal subunit protein uL3 from Leuconostoc mesenteroides subsp. mesenteroides (strain ATCC 8293 / DSM 20343 / BCRC 11652 / CCM 1803 / JCM 6124 / NCDO 523 / NBRC 100496 / NCIMB 8023 / NCTC 12954 / NRRL B-1118 / 37Y).